Reading from the N-terminus, the 304-residue chain is Small ribosomal subunit biogenesis GTPase RsgA (304 aa).

In terms of domain architecture, CP-type G spans 78–237; it reads VSFLTRPPVA…VADTPGFNRP (160 aa). GTP is bound by residues 127–130 and 179–187; these read TKTD and GPSGVGKSS. Zn(2+) contacts are provided by Cys262, Cys267, His269, and Cys275.

Belongs to the TRAFAC class YlqF/YawG GTPase family. RsgA subfamily. In terms of assembly, monomer. Associates with 30S ribosomal subunit, binds 16S rRNA. Requires Zn(2+) as cofactor.

The protein resides in the cytoplasm. One of several proteins that assist in the late maturation steps of the functional core of the 30S ribosomal subunit. Helps release RbfA from mature subunits. May play a role in the assembly of ribosomal proteins into the subunit. Circularly permuted GTPase that catalyzes slow GTP hydrolysis, GTPase activity is stimulated by the 30S ribosomal subunit. The chain is Small ribosomal subunit biogenesis GTPase RsgA from Synechococcus sp. (strain CC9311).